Consider the following 484-residue polypeptide: Glucan endo-1,3-beta-glucosidase 5 (484 aa).

The signal sequence occupies residues 1-26 (MLFKGVFAVFFVITLLYASLLIEVEG). N-linked (GlcNAc...) asparagine glycosylation occurs at asparagine 102. Glutamate 122 serves as the catalytic Proton donor. N-linked (GlcNAc...) asparagine glycans are attached at residues asparagine 129 and asparagine 260. The active-site Nucleophile is the glutamate 267. Cysteine 366 and cysteine 428 form a disulfide bridge. An N-linked (GlcNAc...) asparagine glycan is attached at asparagine 409. Alanine 460 carries the GPI-anchor amidated alanine lipid modification. A propeptide spans 461-484 (SAMMPITRSTAVLLLLSICLYIVL) (removed in mature form).

This sequence belongs to the glycosyl hydrolase 17 family. Contains two additional disulfide bonds.

Its subcellular location is the cell membrane. The enzyme catalyses Hydrolysis of (1-&gt;3)-beta-D-glucosidic linkages in (1-&gt;3)-beta-D-glucans.. This chain is Glucan endo-1,3-beta-glucosidase 5, found in Arabidopsis thaliana (Mouse-ear cress).